We begin with the raw amino-acid sequence, 354 residues long: uncharacterized protein (354 aa).

A disordered region spans residues 96–130 (QVCPASAPNGKRAMKIPKVKEPRGENSSKKSSADQ). The span at 113-127 (KVKEPRGENSSKKSS) shows a compositional bias: basic and acidic residues.

This is an uncharacterized protein from Caenorhabditis elegans.